The chain runs to 350 residues: tRNA N6-adenosine threonylcarbamoyltransferase (350 aa).

Residues His113 and His117 each coordinate Fe cation. Residues 135–139 (LVSGG), Asp169, Gly182, Asp186, and Asn282 contribute to the substrate site. Asp310 serves as a coordination point for Fe cation.

Belongs to the KAE1 / TsaD family. Requires Fe(2+) as cofactor.

The protein resides in the cytoplasm. It carries out the reaction L-threonylcarbamoyladenylate + adenosine(37) in tRNA = N(6)-L-threonylcarbamoyladenosine(37) in tRNA + AMP + H(+). Its function is as follows. Required for the formation of a threonylcarbamoyl group on adenosine at position 37 (t(6)A37) in tRNAs that read codons beginning with adenine. Is involved in the transfer of the threonylcarbamoyl moiety of threonylcarbamoyl-AMP (TC-AMP) to the N6 group of A37, together with TsaE and TsaB. TsaD likely plays a direct catalytic role in this reaction. This is tRNA N6-adenosine threonylcarbamoyltransferase from Corynebacterium diphtheriae (strain ATCC 700971 / NCTC 13129 / Biotype gravis).